Here is a 407-residue protein sequence, read N- to C-terminus: Peptidase T (407 aa).

Histidine 82 contributes to the Zn(2+) binding site. The active site involves aspartate 84. Aspartate 143 is a Zn(2+) binding site. Glutamate 177 (proton acceptor) is an active-site residue. The Zn(2+) site is built by glutamate 178, aspartate 200, and histidine 382.

This sequence belongs to the peptidase M20B family. Zn(2+) serves as cofactor.

It is found in the cytoplasm. The catalysed reaction is Release of the N-terminal residue from a tripeptide.. Its function is as follows. Cleaves the N-terminal amino acid of tripeptides. The protein is Peptidase T of Streptococcus pyogenes serotype M18 (strain MGAS8232).